Here is a 345-residue protein sequence, read N- to C-terminus: Anthranilate phosphoribosyltransferase (345 aa).

5-phospho-alpha-D-ribose 1-diphosphate-binding positions include Gly75, 78-79, Ser83, 85-88, 103-111, and Gly115; these read GD, NIST, and KHGNRAASS. Gly75 contributes to the anthranilate binding site. Residue Ser87 participates in Mg(2+) binding. Asn106 provides a ligand contact to anthranilate. Anthranilate is bound at residue Arg161. Mg(2+)-binding residues include Asp219 and Glu220.

It belongs to the anthranilate phosphoribosyltransferase family. As to quaternary structure, homodimer. The cofactor is Mg(2+).

The catalysed reaction is N-(5-phospho-beta-D-ribosyl)anthranilate + diphosphate = 5-phospho-alpha-D-ribose 1-diphosphate + anthranilate. The protein operates within amino-acid biosynthesis; L-tryptophan biosynthesis; L-tryptophan from chorismate: step 2/5. Catalyzes the transfer of the phosphoribosyl group of 5-phosphorylribose-1-pyrophosphate (PRPP) to anthranilate to yield N-(5'-phosphoribosyl)-anthranilate (PRA). The chain is Anthranilate phosphoribosyltransferase from Nocardia farcinica (strain IFM 10152).